A 202-amino-acid chain; its full sequence is Recombination protein RecR (202 aa).

A C4-type zinc finger spans residues 56–71 (CRVCGNLDSADPCSVC). The Toprim domain maps to 79 to 179 (GLICVVESVG…SVTRLAQGIP (101 aa)).

This sequence belongs to the RecR family.

May play a role in DNA repair. It seems to be involved in an RecBC-independent recombinational process of DNA repair. It may act with RecF and RecO. The chain is Recombination protein RecR from Granulibacter bethesdensis (strain ATCC BAA-1260 / CGDNIH1).